A 239-amino-acid chain; its full sequence is Protein canopy homolog 4 (239 aa).

The first 20 residues, 1–20 (MGPVRLGTLLFILTVYGAWA), serve as a signal peptide directing secretion. 3 cysteine pairs are disulfide-bonded: Cys37–Cys195, Cys40–Cys183, and Cys93–Cys155. Positions 199–239 (TWTGKEKITDGQEKTEEEEQDQEEEEMTNTPVHSQHDPEDL) are disordered. The segment covering 201 to 212 (TGKEKITDGQEK) has biased composition (basic and acidic residues). A compositionally biased stretch (acidic residues) spans 213-225 (TEEEEQDQEEEEM).

It belongs to the canopy family. As to quaternary structure, interacts with TLR4.

The protein localises to the secreted. In terms of biological role, plays a role in the regulation of the cell surface expression of TLR4. The polypeptide is Protein canopy homolog 4 (CNPY4) (Bos taurus (Bovine)).